Here is a 622-residue protein sequence, read N- to C-terminus: Threonine--tRNA ligase (622 aa).

Residues 1-141 are editing domain; it reads MKTLLIHSDY…SRKITTERKE (141 aa). Residues 199-498 are catalytic; sequence PHVKYIKEKE…TLENKPPALP (300 aa). 3 residues coordinate Zn(2+): C291, H343, and H467.

Belongs to the class-II aminoacyl-tRNA synthetase family. In terms of assembly, homodimer. Zn(2+) is required as a cofactor.

It localises to the cytoplasm. The enzyme catalyses tRNA(Thr) + L-threonine + ATP = L-threonyl-tRNA(Thr) + AMP + diphosphate + H(+). Functionally, catalyzes the attachment of threonine to tRNA(Thr) in a two-step reaction: L-threonine is first activated by ATP to form Thr-AMP and then transferred to the acceptor end of tRNA(Thr). Also edits incorrectly charged L-seryl-tRNA(Thr). In Methanococcus maripaludis (strain C5 / ATCC BAA-1333), this protein is Threonine--tRNA ligase.